The primary structure comprises 602 residues: MRSMRALQNALSRAGSHGRRGGWGHPSRGPLLGRGVRYYLGEAAAQGRGTPHSHQPQHSDHDASHSGMLPRLGDLLFYTIAEGQERIPIHKFTTALKATGLQTSDPRLQDCMSKMQRMVQESSSGGLLDRELFQKCVSSNIVLLTQAFRKKFVIPDFEEFTGHVDRIFEDAKEPTGGKVAAYIPHLAKSNPDLWGVSLCTVDGQRHSVGHTKIPFCLQSCVKPLTYAISVSTLGTDYVHKFVGKEPSGLRYNKLSLNEEGIPHNPMVNAGAIVVSSLIKMDCNKAEKFDFVLQYLNKMAGNEFMGFSNATFQSEKETGDRNYAIGYYLKEKKCFPKGVDMMAALDLYFQLCSVEVTCESGSVMAATLANGGICPITGESVLSAEAVRNTLSLMHSCGMYDFSGQFAFHVGLPAKSAVSGAILLVVPNVMGMMCLSPPLDKLGNSQRGINFCQKLVSLFNFHNYDNLRHCARKLDPRREGGEVRNKTVVNLLFAAYSGDVSALRRFALSAMDMEQKDYDSRTALHVAAAEGHIEVVKFLIEACKVNPFVKDRWGNIPLDDAVQFNHLEVVKLLQDYHDSYLLSETQAEAAAETLSKENLESMV.

The N-terminal 14 residues, 1–14 (MRSMRALQNALSRA), are a transit peptide targeting the mitochondrion. Disordered regions lie at residues 1 to 29 (MRSM…PSRG) and 45 to 66 (AQGR…ASHS). S219 lines the substrate pocket. An N6-succinyllysine modification is found at K253. N268 contributes to the substrate binding site. 2 positions are modified to N6-acetyllysine: K279 and K284. Substrate-binding residues include E314 and N321. An N6-acetyllysine modification is found at K329. Residues Y347, Y399, and V417 each coordinate substrate. 2 ANK repeats span residues 518-551 (DSRT…VKDR) and 552-585 (WGNI…SETQ).

This sequence belongs to the glutaminase family. Homotetramer, dimer of dimers. Does not assemble into higher oligomers. Interacts with the PDZ domain of the syntrophin SNTA1. Interacts with the PDZ domain of TAX1BP3.

The protein localises to the mitochondrion. The enzyme catalyses L-glutamine + H2O = L-glutamate + NH4(+). Enzyme activity is not stimulated by phosphate. Phosphate increases kcat, but decreases substrate affinity, resulting in unchanged enzyme activity. Functionally, plays an important role in the regulation of glutamine catabolism. Promotes mitochondrial respiration and increases ATP generation in cells by catalyzing the synthesis of glutamate and alpha-ketoglutarate. Increases cellular anti-oxidant function via NADH and glutathione production. May play a role in preventing tumor proliferation. This chain is Glutaminase liver isoform, mitochondrial (Gls2), found in Mus musculus (Mouse).